Reading from the N-terminus, the 231-residue chain is PIAGSMVLAAILLKLGGYGIIRMMQVLPTTKTEMFLPFLVLALWGAILANLTCLQQTDLKSLIAYSSISHMGLVVAAIIIQTPWGLSGAMALMVAHGFTSSSLFCLANTTYERTHTRILILTRGFHNILPMATTWWLLANLLNIATPPSMNFTGELLIMSALFNWCPTTIILLGLSMLITASYSLHMFLSTQMGPTALSNQTAPMHSREHLLITLHLIPLMLISMKPELVI.

The next 6 helical transmembrane spans lie at 1–21 (PIAG…YGII), 34–54 (MFLP…LTCL), 63–85 (IAYS…TPWG), 89–111 (AMAL…NTTY), 128–148 (ILPM…ATPP), and 156–176 (LLIM…LGLS).

The protein belongs to the complex I subunit 4 family.

The protein localises to the mitochondrion membrane. It catalyses the reaction a ubiquinone + NADH + 5 H(+)(in) = a ubiquinol + NAD(+) + 4 H(+)(out). Core subunit of the mitochondrial membrane respiratory chain NADH dehydrogenase (Complex I) that is believed to belong to the minimal assembly required for catalysis. Complex I functions in the transfer of electrons from NADH to the respiratory chain. The immediate electron acceptor for the enzyme is believed to be ubiquinone. In Bothriechis lateralis (Side-striped palm pitviper), this protein is NADH-ubiquinone oxidoreductase chain 4 (MT-ND4).